The primary structure comprises 240 residues: Putative N-acetylmannosamine-6-phosphate 2-epimerase (240 aa).

This sequence belongs to the NanE family.

The catalysed reaction is an N-acyl-D-glucosamine 6-phosphate = an N-acyl-D-mannosamine 6-phosphate. Its pathway is amino-sugar metabolism; N-acetylneuraminate degradation; D-fructose 6-phosphate from N-acetylneuraminate: step 3/5. Its function is as follows. Converts N-acetylmannosamine-6-phosphate (ManNAc-6-P) to N-acetylglucosamine-6-phosphate (GlcNAc-6-P). The protein is Putative N-acetylmannosamine-6-phosphate 2-epimerase of Vibrio cholerae serotype O1 (strain ATCC 39315 / El Tor Inaba N16961).